We begin with the raw amino-acid sequence, 205 residues long: E3 ubiquitin-protein ligase complex slx8-rfp subunit rfp2 (205 aa).

An RING-type; degenerate zinc finger spans residues 147-190; sequence CAKCGNELVSDEKKSIFAAKCGHLFCSTCAKELRKKTVPCPVQH.

In terms of assembly, part of an E3 ubiquitin complex including rfp1, rfp2 and slx8. Interacts with slx8.

The protein localises to the nucleus. The catalysed reaction is S-ubiquitinyl-[E2 ubiquitin-conjugating enzyme]-L-cysteine + [acceptor protein]-L-lysine = [E2 ubiquitin-conjugating enzyme]-L-cysteine + N(6)-ubiquitinyl-[acceptor protein]-L-lysine.. It participates in protein modification; protein ubiquitination. Functionally, mediates ubiquitination and subsequent desumoylation/degradation of sumoylated proteins and proteins containing SUMO-like domains. Involved in maintaining genome stability where it acts in the cellular response to DNA damage. The polypeptide is E3 ubiquitin-protein ligase complex slx8-rfp subunit rfp2 (rfp2) (Schizosaccharomyces pombe (strain 972 / ATCC 24843) (Fission yeast)).